A 76-amino-acid polypeptide reads, in one-letter code: Conotoxin Cal5a L2 (76 aa).

The signal sequence occupies residues 1–22; it reads MRFYIGLMAALMLTSILRTDSA. Positions 23–42 are excised as a propeptide; that stretch reads SVGQTGTKSELALIERVIRQ. Position 50 is a 4-hydroxyproline (proline 50). 4-hydroxyproline; partial occurs at positions 58, 62, and 64.

Belongs to the conotoxin T superfamily. In terms of processing, contains 2 disulfide bonds that can be either 'C1-C3, C2-C4' or 'C1-C4, C2-C3', since these disulfide connectivities have been observed for conotoxins with cysteine framework V (for examples, see AC P0DQQ7 and AC P81755). As to expression, expressed by the venom duct.

Its subcellular location is the secreted. Functionally, probable neurotoxin with unknown target. Possibly targets ion channels. This chain is Conotoxin Cal5a L2, found in Californiconus californicus (California cone).